The following is a 231-amino-acid chain: GDSL lipase Rv0518 (231 aa).

Positions 1 to 20 (MSRPGTYVIGLTLLVGLVVG) are cleaved as a signal peptide. Residue Ser46 is the Nucleophile of the active site. Asp205 (proton donor) is an active-site residue. His208 (proton acceptor) is an active-site residue.

The protein belongs to the 'GDSL' lipolytic enzyme family.

The protein resides in the secreted. The protein localises to the cell wall. It localises to the extracellular space. The enzyme catalyses a fatty acid ester + H2O = an aliphatic alcohol + a fatty acid + H(+). It carries out the reaction decanoate ester + H2O = decanoate + an aliphatic alcohol + H(+). It catalyses the reaction an octanoate ester + H2O = an aliphatic alcohol + octanoate + H(+). The catalysed reaction is a dodecanoate ester + H2O = an aliphatic alcohol + dodecanoate + H(+). The enzyme catalyses a tetradecanoate ester + H2O = an aliphatic alcohol + tetradecanoate + H(+). With respect to regulation, activity is inhibited by the serine modifier phenylmethylsulfonyl fluoride (PMSF). Functionally, GDSL lipase that catalyzes the hydrolysis of p-nitrophenyl (pNP) esters. pNP-decanoate (C10) is the preferred substrate. It can also use pNP-octanoate (C8), pNP-dodecanoate (C12) and pNP-tetradecanoate (C14). Has lower activity with pNP-butyrate (C4), pNP-palmitate (C16) and pNP-stearate (C18). Does not show phospholipase A1 activity. Might help bacteria to utilize available lipids for its growth as well as provide resistance to various intracellular stresses by cell wall modulation resulting in enhanced intracellular survival. In Mycobacterium tuberculosis (strain ATCC 25618 / H37Rv), this protein is GDSL lipase Rv0518.